The sequence spans 137 residues: Large ribosomal subunit protein uL16 (137 aa).

This sequence belongs to the universal ribosomal protein uL16 family. Part of the 50S ribosomal subunit.

Binds 23S rRNA and is also seen to make contacts with the A and possibly P site tRNAs. The chain is Large ribosomal subunit protein uL16 from Xylella fastidiosa (strain M23).